Consider the following 444-residue polypeptide: Putative methylesterase 13, chloroplastic (444 aa).

Disordered regions lie at residues 1-32 (MGNSFTCISHEQEQRPKKSSGGGGNNSGKYKY), 49-90 (PSLS…KDSH), and 124-176 (SVVY…QLVD). A chloroplast-targeting transit peptide spans 1 to 60 (MGNSFTCISHEQEQRPKKSSGGGGNNSGKYKYVRRLSLMPSFRRRTLLPSLSCSGSSSTS). Residues 49–64 (PSLSCSGSSSTSSSKK) show a composition bias toward low complexity. A compositionally biased stretch (basic residues) spans 65–82 (GGIKAKTKKIRERHHHHH). Residues 124–148 (SVVYPSAQPSGTSSGPVSAVQTPKK) show a composition bias toward polar residues. The segment covering 149–164 (SSAGFVRSSSSRQRSS) has biased composition (low complexity). An AB hydrolase-1 domain is found at 190 to 310 (FVLVHGGGFG…LFNQQLGSND (121 aa)). Asp-264 (acyl-ester intermediate) is an active-site residue. Active-site charge relay system residues include Asp-390 and His-418.

The protein belongs to the AB hydrolase superfamily. Methylesterase family.

It localises to the plastid. The protein localises to the chloroplast. Functionally, putative methylesterase. The chain is Putative methylesterase 13, chloroplastic from Arabidopsis thaliana (Mouse-ear cress).